Consider the following 504-residue polypeptide: L-carnitine/gamma-butyrobetaine antiporter (504 aa).

The next 12 helical transmembrane spans lie at 10 to 30 (IEPK…WLTV), 51 to 71 (WGWA…WLVF), 92 to 112 (IFMM…SIEI), 143 to 163 (GPLP…FFFV), 195 to 215 (FYLV…TPLV), 231 to 251 (LDAI…ACGL), 263 to 283 (SYLS…SFIM), 316 to 336 (WTVF…IFLA), 347 to 367 (LCFG…TVLG), 398 to 418 (WAAL…CFIA), 446 to 466 (LLVR…LLAL), and 475 to 495 (AIIA…LSFI).

Belongs to the BCCT transporter (TC 2.A.15) family. CaiT subfamily. In terms of assembly, homotrimer.

The protein localises to the cell inner membrane. The enzyme catalyses 4-(trimethylamino)butanoate(in) + (R)-carnitine(out) = 4-(trimethylamino)butanoate(out) + (R)-carnitine(in). It functions in the pathway amine and polyamine metabolism; carnitine metabolism. Its function is as follows. Catalyzes the exchange of L-carnitine for gamma-butyrobetaine. The polypeptide is L-carnitine/gamma-butyrobetaine antiporter (Shigella flexneri serotype 5b (strain 8401)).